Reading from the N-terminus, the 50-residue chain is uncharacterized protein (50 aa).

This is an uncharacterized protein from Sinorhizobium fredii (strain NBRC 101917 / NGR234).